A 188-amino-acid chain; its full sequence is Protein Cripto (188 aa).

Positions 1–30 (MDCRKMARFSYSVIWIMAISKVFELGLVAG) are cleaved as a signal peptide. An EGF-like domain is found at 78-107 (LNRTCCLNGGTCMLGSFCACPPSFYGRNCE). The N-linked (GlcNAc...) asparagine glycan is linked to N79. Cystine bridges form between C82/C89, C83/C95, C97/C106, C115/C133, C128/C149, and C131/C140. D150 carries the GPI-anchor amidated aspartate lipid modification. Residues 151–188 (GLVMDEHLVASRTPELPPSARTTTFMLVGICLSIQSYY) constitute a propeptide, removed in mature form.

The protein belongs to the EGF-CFC (Cripto-1/FRL1/Cryptic) family. As to quaternary structure, interacts with the activin type-1 receptor ACVR1B. The GPI-anchor is attached to the protein in the endoplasmic reticulum and serves to target the protein to the cell surface. There, it is processed by GPI processing phospholipase A2 (TMEM8A), removing an acyl-chain at the sn-2 position of GPI and releasing CRIPTO as a lysophosphatidylinositol-bearing form, which is further cleaved by phospholipase D (GPLD1) into a soluble form. Preferentially expressed in gastric and colorectal carcinomas than in their normal counterparts. Expressed in breast and lung.

The protein localises to the cell membrane. The protein resides in the secreted. In terms of biological role, GPI-anchored cell membrane protein involved in Nodal signaling. Cell-associated CRIPTO acts as a Nodal coreceptor in cis. Shedding of CRIPTO by TMEM8A modulates Nodal signaling by allowing soluble CRIPTO to act as a Nodal coreceptor on other cells. Could play a role in the determination of the epiblastic cells that subsequently give rise to the mesoderm. In Homo sapiens (Human), this protein is Protein Cripto.